Reading from the N-terminus, the 55-residue chain is Large ribosomal subunit protein bL33 (55 aa).

Basic and acidic residues predominate over residues 1–11 (MAKGSREKIKL). Residues 1–32 (MAKGSREKIKLESSASTGHFYTTSKNKRTKPE) form a disordered region. Over residues 13-24 (SSASTGHFYTTS) the composition is skewed to polar residues.

Belongs to the bacterial ribosomal protein bL33 family.

The sequence is that of Large ribosomal subunit protein bL33 from Polynucleobacter necessarius subsp. necessarius (strain STIR1).